The sequence spans 510 residues: 2,3-bisphosphoglycerate-independent phosphoglycerate mutase (510 aa).

2 residues coordinate Mn(2+): Asp-12 and Ser-62. The Phosphoserine intermediate role is filled by Ser-62. Substrate contacts are provided by residues His-123, 153-154 (RD), Arg-185, Arg-191, 260-263 (RPDR), and Lys-335. Mn(2+) contacts are provided by Asp-402, His-406, Asp-443, His-444, and His-461.

Belongs to the BPG-independent phosphoglycerate mutase family. Monomer. Requires Mn(2+) as cofactor.

It carries out the reaction (2R)-2-phosphoglycerate = (2R)-3-phosphoglycerate. It functions in the pathway carbohydrate degradation; glycolysis; pyruvate from D-glyceraldehyde 3-phosphate: step 3/5. Its function is as follows. Catalyzes the interconversion of 2-phosphoglycerate and 3-phosphoglycerate. This Listeria monocytogenes serovar 1/2a (strain ATCC BAA-679 / EGD-e) protein is 2,3-bisphosphoglycerate-independent phosphoglycerate mutase.